Consider the following 410-residue polypeptide: Serine/threonine transporter SstT (410 aa).

9 helical membrane-spanning segments follow: residues 11–31 (VSLV…AVTV), 45–65 (FVGA…ISAI), 79–99 (ILIL…VASF), 138–158 (ALLN…GIAL), 179–199 (IVTW…FDAI), 214–234 (LAVL…LIVF), 285–305 (ISIP…ISVL), 327–347 (VLSA…LLLI), and 353–373 (LFGI…IIGV).

The protein belongs to the dicarboxylate/amino acid:cation symporter (DAACS) (TC 2.A.23) family.

Its subcellular location is the cell membrane. It catalyses the reaction L-serine(in) + Na(+)(in) = L-serine(out) + Na(+)(out). It carries out the reaction L-threonine(in) + Na(+)(in) = L-threonine(out) + Na(+)(out). Its function is as follows. Involved in the import of serine and threonine into the cell, with the concomitant import of sodium (symport system). This is Serine/threonine transporter SstT from Geobacillus thermodenitrificans (strain NG80-2).